A 244-amino-acid polypeptide reads, in one-letter code: MRPNNRPVDQTRPVKITRNYTRYAEGSVLVEFGETKVLCNATVEETVPRFLKGQQQGWVTAEYGMLPRATHSRTQREAAKGKQGGRTMEIQRLIARSLRAVVDLKALGERTITVDCDVIQADGGTRTASITGACVALHDAINKLIADGLLKENPMKGLVAAISVGIVDGQAVCDLEYVEDSNAETDMNVVMVEDGRLVEVQGTAEGEPFSHMELLQLLDLAQKGIEQLFEAQRQALNATSDAIR.

Phosphate is bound by residues Arg-86 and 124-126; that span reads GTR.

This sequence belongs to the RNase PH family. As to quaternary structure, homohexameric ring arranged as a trimer of dimers.

The enzyme catalyses tRNA(n+1) + phosphate = tRNA(n) + a ribonucleoside 5'-diphosphate. Functionally, phosphorolytic 3'-5' exoribonuclease that plays an important role in tRNA 3'-end maturation. Removes nucleotide residues following the 3'-CCA terminus of tRNAs; can also add nucleotides to the ends of RNA molecules by using nucleoside diphosphates as substrates, but this may not be physiologically important. Probably plays a role in initiation of 16S rRNA degradation (leading to ribosome degradation) during starvation. This Glaesserella parasuis serovar 5 (strain SH0165) (Haemophilus parasuis) protein is Ribonuclease PH.